A 290-amino-acid chain; its full sequence is 4-hydroxy-tetrahydrodipicolinate synthase (290 aa).

A pyruvate-binding site is contributed by Thr-48. Catalysis depends on Tyr-137, which acts as the Proton donor/acceptor. Residue Lys-165 is the Schiff-base intermediate with substrate of the active site. Ile-206 is a pyruvate binding site.

It belongs to the DapA family. In terms of assembly, homotetramer; dimer of dimers.

Its subcellular location is the cytoplasm. The enzyme catalyses L-aspartate 4-semialdehyde + pyruvate = (2S,4S)-4-hydroxy-2,3,4,5-tetrahydrodipicolinate + H2O + H(+). Its pathway is amino-acid biosynthesis; L-lysine biosynthesis via DAP pathway; (S)-tetrahydrodipicolinate from L-aspartate: step 3/4. Its function is as follows. Catalyzes the condensation of (S)-aspartate-beta-semialdehyde [(S)-ASA] and pyruvate to 4-hydroxy-tetrahydrodipicolinate (HTPA). This Enterococcus faecalis (strain ATCC 700802 / V583) protein is 4-hydroxy-tetrahydrodipicolinate synthase.